We begin with the raw amino-acid sequence, 589 residues long: GTPase LSG1-2 (589 aa).

Residues 1–26 (MGKSEKTSLGRSLVKHHNHMIQESKD) form a disordered region. Residues 158–366 (WRQLWRVLER…LCDCPGLVFP (209 aa)) enclose the CP-type G domain. The short motif at 176–180 (DARDP) is the DARXP motif element. The G4 stretch occupies residues 206–209 (NKAD). 206-209 (NKAD) serves as a coordination point for GTP. The segment at 237 to 239 (AAT) is G5. The G1 stretch occupies residues 315-322 (GYPNVGKS). 318-323 (NVGKSS) lines the GTP pocket. Residues 341–345 (GKTKH) are G2. A G3 region spans residues 359-362 (DCPG). Gly-362 contacts GTP. The segment covering 495–509 (GSESDDSAVGDETEN) has biased composition (acidic residues). 2 disordered regions span residues 495–515 (GSES…VPGI) and 534–589 (SKKV…LTMR). The Nuclear localization signal motif lies at 534–541 (SKKVTAKK). The segment covering 534-558 (SKKVTAKKQTASHKQHKKPQRKKDR) has biased composition (basic residues). Residues 580–589 (PANTGPLTMR) show a composition bias toward polar residues.

It belongs to the TRAFAC class YlqF/YawG GTPase family. As to expression, ubiquitous, with the highest expression in reproductive and strongly dividing tissues.

The protein resides in the cytoplasm. It is found in the nucleus. In terms of biological role, GTPase involved in ribosome biogenesis. Binds to 23S rRNA and associates with 60S pre-ribosomes. Involved in early cotyledon and leaf development. This is GTPase LSG1-2 from Arabidopsis thaliana (Mouse-ear cress).